Reading from the N-terminus, the 874-residue chain is MKAAEIREKFLKFFESKGHTIVRSSSLVPGNDPTLLFTNSGMVQFKDVFLGAETRPYSRATTAQRSVRAGGKHNDLENVGYTARHHTFFEMLGNFSFGDYFKRDAIHYAWELLTSVYKLPADKLWVTVYHDDDEAYDIWAKEVGVPAERIIRIGDNKGARYASDNFWQMGDTGPCGPCSEIFYDHGPDVWGGPPGSPEEDGDRYIEIWNLVFMQFNRDAQGNMTRLPKPCVDTGMGLERIAAVLQHVHSNYEIDLFQQLIKASARETGVADLANNSLKVIADHIRACSFLIVDGVIPGNEGRGYVLRRIVRRAIRHGYKLGRKAPFFHKLVADLVAEMGAAYPELKEAEPRVTDVLRQEEERFFETIEHGMSILEAALAELDAAGGKTLDGELAFKLHDTYGFPLDLTADVCRERGVTVDEPAFDDAMARQREQARAAGKFKATQGLEYTGAKTTFHGYEEIAFDDAKVVALYVEGASVGEVKAGESAVVVLDHTPFYAESGGQVGDQGVLANAATRFAVGDTLKVQADVIGHHGELEQGTLKVGDVVRAEIDAARRARTARNHSATHLMHKALRDVLGSHVQQKGSLVDADKTRFDFAHNAPLTDDEIRRVEAIVNEQVLANAPGIVRVMPYDDAVKGGAMALFGEKYGDEVRVLDLGFSRELCGGTHVHRTGDIGLFKIVAEGGVAAGIRRVEAITGDNAVRYVQALDARVNAAAAALKAQPSELLQRIGQVQDQVKSLEKELGALKSKLASSQGDELAQQAVEVGGVHVLAATLDGADAKTLRETVDKLKDKLKSAAIVLAAVDGGKVSLIAGVTADASKKVKAGELVNFVAQQVGGKGGGRSDMAQAGGTEPAKLPAALAGVKGWVEARL.

Zn(2+) is bound by residues H564, H568, C665, and H669.

This sequence belongs to the class-II aminoacyl-tRNA synthetase family. The cofactor is Zn(2+).

It localises to the cytoplasm. The catalysed reaction is tRNA(Ala) + L-alanine + ATP = L-alanyl-tRNA(Ala) + AMP + diphosphate. Catalyzes the attachment of alanine to tRNA(Ala) in a two-step reaction: alanine is first activated by ATP to form Ala-AMP and then transferred to the acceptor end of tRNA(Ala). Also edits incorrectly charged Ser-tRNA(Ala) and Gly-tRNA(Ala) via its editing domain. This Burkholderia mallei (strain ATCC 23344) protein is Alanine--tRNA ligase.